We begin with the raw amino-acid sequence, 756 residues long: Polyribonucleotide nucleotidyltransferase (756 aa).

Mg(2+)-binding residues include aspartate 532 and aspartate 538. The KH domain occupies 598–657 (PRVTAIKVPVDKIGEVIGPKGKMINSITEQTGANISIEDDGTVFVGATDGPSAQAAIDMI). The region spanning 669–738 (GERFLGTVVK…ARGKISLIPV (70 aa)) is the S1 motif domain.

This sequence belongs to the polyribonucleotide nucleotidyltransferase family. Mg(2+) is required as a cofactor.

The protein localises to the cytoplasm. The catalysed reaction is RNA(n+1) + phosphate = RNA(n) + a ribonucleoside 5'-diphosphate. Its function is as follows. Involved in mRNA degradation. Catalyzes the phosphorolysis of single-stranded polyribonucleotides processively in the 3'- to 5'-direction. The chain is Polyribonucleotide nucleotidyltransferase from Rhodococcus erythropolis (strain PR4 / NBRC 100887).